Consider the following 587-residue polypeptide: Probable terpene synthase 12 (587 aa).

Residues D338, D342, and E489 each coordinate Mg(2+). Residues 338–342 carry the DDXXD motif motif; sequence DDVYD.

It belongs to the terpene synthase family. Requires Mg(2+) as cofactor.

Its function is as follows. Probable sesquiterpene synthase. This Ricinus communis (Castor bean) protein is Probable terpene synthase 12 (TPS12).